Here is a 597-residue protein sequence, read N- to C-terminus: NADH-quinone oxidoreductase subunit C/D (597 aa).

Residues 1 to 187 (MIDENKKKNT…ESFFLDEQKE (187 aa)) form an NADH dehydrogenase I subunit C region. The interval 211 to 597 (DFMFLNLGPN…IDFVMSDVDR (387 aa)) is NADH dehydrogenase I subunit D.

The protein in the N-terminal section; belongs to the complex I 30 kDa subunit family. In the C-terminal section; belongs to the complex I 49 kDa subunit family. In terms of assembly, NDH-1 is composed of 13 different subunits. Subunits NuoB, CD, E, F, and G constitute the peripheral sector of the complex.

The protein localises to the cell inner membrane. The catalysed reaction is a quinone + NADH + 5 H(+)(in) = a quinol + NAD(+) + 4 H(+)(out). In terms of biological role, NDH-1 shuttles electrons from NADH, via FMN and iron-sulfur (Fe-S) centers, to quinones in the respiratory chain. The immediate electron acceptor for the enzyme in this species is believed to be ubiquinone. Couples the redox reaction to proton translocation (for every two electrons transferred, four hydrogen ions are translocated across the cytoplasmic membrane), and thus conserves the redox energy in a proton gradient. In Buchnera aphidicola subsp. Schizaphis graminum (strain Sg), this protein is NADH-quinone oxidoreductase subunit C/D.